The chain runs to 215 residues: MKYELTATEARVIGCLLEKQVTTPEQYPLSVNGVVTASNQKTNREPVMNLSEHEVQEQLDNLVKRHFLRTVSGFGNRVTKYEQRFCNSEFGNLKLSPAEVALIATLLLRGAQTPGELRSRASRMYEFSDMAEVESTLEQLAARDDGPYVVRLAREPGKRESRYMHLFCGEVDEPVSSDDAPQAASGDLHARVEALEGEVAELKQRLDSLLAHLGD.

Belongs to the UPF0502 family.

The polypeptide is UPF0502 protein CKO_01995 (Citrobacter koseri (strain ATCC BAA-895 / CDC 4225-83 / SGSC4696)).